The primary structure comprises 284 residues: MTELYIGSHLSTAGGWNALLERSHEEGGTAFAFFPRSPYGKRSKALDPADAATFGARLKAEDYGPLVVHAPYVYNLAGKDEAKRAFAIEALAEDIELLTAIREAGQEVYINIHPGAHVGQGTKTGCQLISEGLNQVFERTTGVMVLLETMAGKGTECGRNFEELATIMNGVKNKANVGVTFDTCHVLDAGYDLVNDYDGVMRQLDEAIGLAKVKAIHVNDSQFGLDSHKDRHANIGQGQLGIPFFTRLVNDPIMAKLPMILETKEQTPATHRDEIELLRGLVQK.

Zn(2+) contacts are provided by His-69, His-113, Glu-148, Asp-182, His-185, His-217, Asp-230, His-232, and Glu-262.

This sequence belongs to the AP endonuclease 2 family. Zn(2+) is required as a cofactor.

The catalysed reaction is Endonucleolytic cleavage to 5'-phosphooligonucleotide end-products.. Endonuclease IV plays a role in DNA repair. It cleaves phosphodiester bonds at apurinic or apyrimidinic (AP) sites, generating a 3'-hydroxyl group and a 5'-terminal sugar phosphate. The polypeptide is Probable endonuclease 4 (Bifidobacterium longum subsp. infantis (strain ATCC 15697 / DSM 20088 / JCM 1222 / NCTC 11817 / S12)).